A 257-amino-acid chain; its full sequence is Imidazole glycerol phosphate synthase subunit hisF1 (257 aa).

Catalysis depends on residues Asp11 and Asp130.

Belongs to the HisA/HisF family. As to quaternary structure, heterodimer of HisH and HisF.

It is found in the cytoplasm. The enzyme catalyses 5-[(5-phospho-1-deoxy-D-ribulos-1-ylimino)methylamino]-1-(5-phospho-beta-D-ribosyl)imidazole-4-carboxamide + L-glutamine = D-erythro-1-(imidazol-4-yl)glycerol 3-phosphate + 5-amino-1-(5-phospho-beta-D-ribosyl)imidazole-4-carboxamide + L-glutamate + H(+). The protein operates within amino-acid biosynthesis; L-histidine biosynthesis; L-histidine from 5-phospho-alpha-D-ribose 1-diphosphate: step 5/9. IGPS catalyzes the conversion of PRFAR and glutamine to IGP, AICAR and glutamate. The HisF subunit catalyzes the cyclization activity that produces IGP and AICAR from PRFAR using the ammonia provided by the HisH subunit. This is Imidazole glycerol phosphate synthase subunit hisF1 (hisF1) from Vibrio vulnificus (strain YJ016).